We begin with the raw amino-acid sequence, 180 residues long: Urease accessory protein UreE (180 aa).

Positions 71-90 (AAPSGAGHGDGEQDGTGAPG) are disordered.

Belongs to the UreE family.

It localises to the cytoplasm. Functionally, involved in urease metallocenter assembly. Binds nickel. Probably functions as a nickel donor during metallocenter assembly. This is Urease accessory protein UreE from Kocuria rhizophila (strain ATCC 9341 / DSM 348 / NBRC 103217 / DC2201).